Consider the following 212-residue polypeptide: Maleylpyruvate isomerase (212 aa).

In terms of domain architecture, GST N-terminal spans 1–80; that stretch reads MKLYNFWRSG…WLEEQYPTPA (80 aa). Glutathione contacts are provided by residues 9-11, H38, V52, 64-65, 102-104, 108-110, and R176; these read SGT, QS, DIH, and NRR. Residues 85–212 enclose the GST C-terminal domain; that stretch reads DADGRQRVRA…AAPAAQPDSA (128 aa).

It belongs to the GST superfamily. Zeta family. Homodimer. Glutathione serves as cofactor.

It carries out the reaction 3-maleylpyruvate = 3-fumarylpyruvate. It participates in aromatic compound metabolism; naphthalene degradation. Its function is as follows. Catalyzes the GSH-dependent isomerization of maleylpyruvate to fumarylpyruvate which is subsequently processed by NagK to form pyruvate and fumarate. This chain is Maleylpyruvate isomerase, found in Ralstonia sp.